A 764-amino-acid polypeptide reads, in one-letter code: FHF complex subunit HOOK interacting protein 2A (764 aa).

The tract at residues Ser-190–Ser-236 is disordered. The span at Asp-203–Ser-214 shows a compositional bias: polar residues.

The protein belongs to the FHIP family.

Its function is as follows. May be required for proper functioning of the nervous system. In Mus musculus (Mouse), this protein is FHF complex subunit HOOK interacting protein 2A.